Consider the following 594-residue polypeptide: APOBEC1 complementation factor (594 aa).

RRM domains lie at 56-134 (CEIF…ASVD), 136-218 (CRLF…WAEP), and 231-303 (KILY…LAKP). A required for nuclear localization region spans residues 360–409 (HFPATKGHLSNRAIIRAPSVREIYMNVPVGAAGVRGLGGRGYLAYTGLGR). The residue at position 499 (threonine 499) is a Phosphothreonine.

As to quaternary structure, part of the apolipoprotein B mRNA editing complex with APOBEC1. Interacts with TNPO2; TNPO2 may be responsible for transport of A1CF into the nucleus. Interacts with SYNCRIP. Interacts with CELF2/CUGBP2. Interacts with RBM47. In terms of tissue distribution, widely expressed with highest levels in brain, liver, pancreas, colon and spleen.

The protein resides in the nucleus. It localises to the endoplasmic reticulum. The protein localises to the cytoplasm. Functionally, essential component of the apolipoprotein B mRNA editing enzyme complex which is responsible for the postranscriptional editing of a CAA codon for Gln to a UAA codon for stop in APOB mRNA. Binds to APOB mRNA and is probably responsible for docking the catalytic subunit, APOBEC1, to the mRNA to allow it to deaminate its target cytosine. The complex also protects the edited APOB mRNA from nonsense-mediated decay. The polypeptide is APOBEC1 complementation factor (A1CF) (Homo sapiens (Human)).